The following is a 64-amino-acid chain: Large ribosomal subunit protein bL35c (64 aa).

It belongs to the bacterial ribosomal protein bL35 family.

It localises to the plastid. The protein localises to the chloroplast. The sequence is that of Large ribosomal subunit protein bL35c from Trieres chinensis (Marine centric diatom).